The sequence spans 301 residues: 5'-3' exonuclease (301 aa).

The 83-residue stretch at 182–264 (GYADLALLRG…RVAADVPLPD (83 aa)) folds into the 5'-3' exonuclease domain.

5'-3' exonuclease acting preferentially on double-stranded DNA. This is 5'-3' exonuclease from Streptomyces coelicolor (strain ATCC BAA-471 / A3(2) / M145).